The chain runs to 512 residues: ATP synthase subunit alpha (512 aa).

169 to 176 (GDRKTGKT) contacts ATP.

It belongs to the ATPase alpha/beta chains family. In terms of assembly, F-type ATPases have 2 components, CF(1) - the catalytic core - and CF(0) - the membrane proton channel. CF(1) has five subunits: alpha(3), beta(3), gamma(1), delta(1), epsilon(1). CF(0) has three main subunits: a(1), b(2) and c(9-12). The alpha and beta chains form an alternating ring which encloses part of the gamma chain. CF(1) is attached to CF(0) by a central stalk formed by the gamma and epsilon chains, while a peripheral stalk is formed by the delta and b chains.

The protein resides in the cell membrane. The catalysed reaction is ATP + H2O + 4 H(+)(in) = ADP + phosphate + 5 H(+)(out). In terms of biological role, produces ATP from ADP in the presence of a proton gradient across the membrane. The alpha chain is a regulatory subunit. The chain is ATP synthase subunit alpha from Limosilactobacillus fermentum (strain NBRC 3956 / LMG 18251) (Lactobacillus fermentum).